The following is a 380-amino-acid chain: RNA-binding motif protein, Y chromosome, family 9 (380 aa).

The region spanning 8–86 is the RRM domain; the sequence is GKIFIGGLNI…KRIKVKQARR (79 aa). Disordered regions lie at residues 82–226 and 279–358; these read KQAR…STSR and HEAP…YSAS. Over residues 166-178 the composition is skewed to polar residues; sequence RSATSAQTRSNTG. Composition is skewed to basic and acidic residues over residues 180–190 and 333–351; these read RGREPHRREIS and IDRE…HSPK.

In terms of tissue distribution, testis-specific.

The protein resides in the nucleus. Functionally, RNA-binding protein which may be involved in spermatogenesis. May be required for sperm development, possibly by participating in pre-mRNA splicing in the testis. In Mus musculus (Mouse), this protein is RNA-binding motif protein, Y chromosome, family 9.